Consider the following 269-residue polypeptide: GRF-interacting factor 10 (269 aa).

Positions 1 to 71 (MTAEGEAKNP…GEKDDGACRD (71 aa)) are disordered. A compositionally biased stretch (low complexity) spans 22 to 43 (QQAAPAPAPAQGEVAQEAAVQG). The span at 47 to 69 (EQERDKADREVQGGAGEKDDGAC) shows a compositional bias: basic and acidic residues. The region spanning 113-148 (AFTAMQLQELEQQSRVYQYMAARVPVPTHLVFPVWK) is the QLQ domain. In terms of domain architecture, WRC spans 179-223 (EPEPGRCRRTDGKKWRCWRNTIPNEKYCERHMHRGRKRPVQVFLE). Short sequence motifs (bipartite nuclear localization signal) lie at residues 184–194 (RCRRTDGKKWR) and 212–216 (RGRKR). Positions 217-269 (PVQVFLEDDEPDSASGSKPAAPGKATEGAKKADDKSPSSKKLAVAAPAAVQST) are disordered. The segment covering 243 to 253 (EGAKKADDKSP) has biased composition (basic and acidic residues).

Belongs to the GRF family. As to quaternary structure, interacts with GIF1. As to expression, highly expressed in shoots. Expressed in developing leaves.

Its subcellular location is the nucleus. Its function is as follows. Involved in the regulation of cell proliferation in developing shoots and leaves. Does not possess transactivation activity. The protein is GRF-interacting factor 10 of Zea mays (Maize).